Here is a 521-residue protein sequence, read N- to C-terminus: 2-isopropylmalate synthase (521 aa).

The 263-residue stretch at 5 to 267 (VIIFDTTLRD…HTNIKHQEIH (263 aa)) folds into the Pyruvate carboxyltransferase domain. Mn(2+) is bound by residues Asp-14, His-202, His-204, and Asn-238. The interval 392–521 (KLNYLSVQSG…FAQKTVMETL (130 aa)) is regulatory domain.

The protein belongs to the alpha-IPM synthase/homocitrate synthase family. LeuA type 1 subfamily. Homodimer. The cofactor is Mn(2+).

The protein resides in the cytoplasm. The catalysed reaction is 3-methyl-2-oxobutanoate + acetyl-CoA + H2O = (2S)-2-isopropylmalate + CoA + H(+). It functions in the pathway amino-acid biosynthesis; L-leucine biosynthesis; L-leucine from 3-methyl-2-oxobutanoate: step 1/4. Catalyzes the condensation of the acetyl group of acetyl-CoA with 3-methyl-2-oxobutanoate (2-ketoisovalerate) to form 3-carboxy-3-hydroxy-4-methylpentanoate (2-isopropylmalate). The chain is 2-isopropylmalate synthase from Tolumonas auensis (strain DSM 9187 / NBRC 110442 / TA 4).